The sequence spans 363 residues: Nicotinamide adenine dinucleotide transporter 2, mitochondrial (363 aa).

Solcar repeat units lie at residues Arg-15–Val-107, Leu-115–Tyr-203, and Leu-215–Phe-305. 6 consecutive transmembrane segments (helical) span residues Ala-21–Ile-41, Gly-82–Gly-102, Met-121–Val-141, Leu-176–Ala-196, Leu-215–Thr-235, and Leu-277–Tyr-299. The interval Glu-313 to Lys-363 is disordered. Over residues Asn-315–Leu-343 the composition is skewed to basic and acidic residues. A compositionally biased stretch (polar residues) spans Glu-345–Ser-354.

Belongs to the mitochondrial carrier (TC 2.A.29) family. As to expression, highly expressed in young meristematic shoot area, vascular bundles of leaves, developing siliques including the funiculi, petal veins, developing pollen and central cylinder of roots.

The protein localises to the mitochondrion membrane. With respect to regulation, inhibited by pyridoxal 5'-phosphate, bathophenanthroline, tannic acid, mersalyl, mercuric chloride, p-hydroxymercuribenzoate, p-hydroxymercuribenzoate sulfonate, bromocresol purple and N-ethylmaleimide. In terms of biological role, mediates the NAD(+) import into chloroplast. Favors the NAD(+)(in)/ADP or AMP(out) antiport exchange, but is also able to catalyze a low unidirectional transport (uniport) of NAD(+). Transports NAD(+), nicotinic acid adenine dinucleotide, nicotinamide mononucleotide, nicotinic acid mononucleotide, FAD, FMN, TTP, TDP, TMP, UTP, UDP, UMP, CTP, CDP, CMP, GTP, GDP, GMP, 3'-AMP, ATP, ADP and AMP, has low transport activity with cAMP, NADH and alpha-NAD(+), and has no activity with NADP(+), NADPH, nicotinamide, nicotinic acid, adenosine, thiamine mono- or diphosphate, inorganic phosphate, CoA, folate, NaCl, malate, malonate, citrate, fumarate, aspartate, glutamate, S-adenosylmethionine, lysine, arginine, and ornithine. The chain is Nicotinamide adenine dinucleotide transporter 2, mitochondrial (NDT2) from Arabidopsis thaliana (Mouse-ear cress).